Consider the following 193-residue polypeptide: dCTP deaminase (193 aa).

DCTP contacts are provided by residues 110 to 115 (RSSLAR), D128, 136 to 138 (VLE), Y171, K178, and Q182. The active-site Proton donor/acceptor is E138. The tract at residues 169-193 (RPYNRREDAKYRNQQGAVASRIDKD) is disordered.

Belongs to the dCTP deaminase family. Homotrimer.

It catalyses the reaction dCTP + H2O + H(+) = dUTP + NH4(+). It functions in the pathway pyrimidine metabolism; dUMP biosynthesis; dUMP from dCTP (dUTP route): step 1/2. Catalyzes the deamination of dCTP to dUTP. The chain is dCTP deaminase from Escherichia coli O1:K1 / APEC.